A 281-amino-acid polypeptide reads, in one-letter code: Translation initiation factor IF3-4, chloroplastic (281 aa).

The transit peptide at 1–51 directs the protein to the chloroplast; it reads MAGITSTVGFNAILAGATKTVSHPVKSKLFGLRLCVPEFSIVSLSPYHHRR. Disordered stretches follow at residues 63-86 and 253-281; these read GGGGSRFPGDRRGRQKESEDDDSL and KVQEPPPKKKKKPADDKVSAANITATQDI. 2 stretches are compositionally biased toward basic and acidic residues: residues 70-79 and 253-270; these read PGDRRGRQKE and KVQEPPPKKKKKPADDKV.

The protein belongs to the IF-3 family. As to quaternary structure, monomer.

It localises to the plastid. It is found in the chloroplast. Chloroplast translation initiation factor that is essential for the coordination of leaf and chloroplast development. IF-3 binds to the 30S ribosomal subunit and shifts the equilibrium between 70S ribosomes and their 50S and 30S subunits in favor of the free subunits, thus enhancing the availability of 30S subunits on which protein synthesis initiation begins. The chain is Translation initiation factor IF3-4, chloroplastic from Arabidopsis thaliana (Mouse-ear cress).